We begin with the raw amino-acid sequence, 420 residues long: Gamma-glutamyl phosphate reductase (420 aa).

It belongs to the gamma-glutamyl phosphate reductase family.

It localises to the cytoplasm. The enzyme catalyses L-glutamate 5-semialdehyde + phosphate + NADP(+) = L-glutamyl 5-phosphate + NADPH + H(+). It functions in the pathway amino-acid biosynthesis; L-proline biosynthesis; L-glutamate 5-semialdehyde from L-glutamate: step 2/2. Its function is as follows. Catalyzes the NADPH-dependent reduction of L-glutamate 5-phosphate into L-glutamate 5-semialdehyde and phosphate. The product spontaneously undergoes cyclization to form 1-pyrroline-5-carboxylate. The sequence is that of Gamma-glutamyl phosphate reductase from Acidiphilium cryptum (strain JF-5).